Consider the following 138-residue polypeptide: Putative nickel-responsive regulator (138 aa).

Ni(2+)-binding residues include histidine 76, histidine 87, histidine 89, and cysteine 95.

The protein belongs to the transcriptional regulatory CopG/NikR family. Requires Ni(2+) as cofactor.

Its function is as follows. Transcriptional regulator. This is Putative nickel-responsive regulator from Pseudomonas putida (strain ATCC 47054 / DSM 6125 / CFBP 8728 / NCIMB 11950 / KT2440).